A 450-amino-acid polypeptide reads, in one-letter code: ATP-dependent protease ATPase subunit HslU (450 aa).

ATP is bound by residues V29, 71-76 (GVGKTE), D261, E328, and R400.

It belongs to the ClpX chaperone family. HslU subfamily. As to quaternary structure, a double ring-shaped homohexamer of HslV is capped on each side by a ring-shaped HslU homohexamer. The assembly of the HslU/HslV complex is dependent on binding of ATP.

It is found in the cytoplasm. ATPase subunit of a proteasome-like degradation complex; this subunit has chaperone activity. The binding of ATP and its subsequent hydrolysis by HslU are essential for unfolding of protein substrates subsequently hydrolyzed by HslV. HslU recognizes the N-terminal part of its protein substrates and unfolds these before they are guided to HslV for hydrolysis. The chain is ATP-dependent protease ATPase subunit HslU from Rickettsia peacockii (strain Rustic).